The primary structure comprises 299 residues: Sodium/potassium-transporting ATPase subunit beta-2 (299 aa).

The Cytoplasmic segment spans residues 1–36 (MAALTQKKTCSQMMEEWKEFMWNPRTREFMGRTGSS). The chain crosses the membrane as a helical; Signal-anchor for type II membrane protein span at residues 37–57 (WALILLFYVVFYAFLTAVFSL). The Extracellular portion of the chain corresponds to 58-299 (SLWVMLQTID…VIFTMKIDRL (242 aa)). Residues Asn-101 and Asn-119 are each glycosylated (N-linked (GlcNAc...) asparagine). 2 disulfide bridges follow: Cys-130–Cys-152 and Cys-162–Cys-178. Residues Asn-199, Asn-226, Asn-247, and Asn-259 are each glycosylated (N-linked (GlcNAc...) asparagine). The cysteines at positions 206 and 270 are disulfide-linked.

This sequence belongs to the X(+)/potassium ATPases subunit beta family. In terms of assembly, the sodium/potassium-transporting ATPase is composed of a catalytic alpha subunit, an auxiliary non-catalytic beta subunit and an additional regulatory subunit. In terms of tissue distribution, expressed at a high level in bladder epithelial cells and eye and at a trace level in kidney; it is not detectable in significant amounts in the stomach, colon and small intestine.

It localises to the cell membrane. In terms of biological role, this is the non-catalytic component of the active enzyme, which catalyzes the hydrolysis of ATP coupled with the exchange of Na(+) and K(+) ions across the plasma membrane. The exact function of this glycoprotein is not known. Some specific sequence of the beta subunit can modulate the activation of the Na,K-pump by extracellular potassium ions. This Rhinella marina (Cane toad) protein is Sodium/potassium-transporting ATPase subunit beta-2.